The chain runs to 188 residues: Probable nicotinate-nucleotide adenylyltransferase (188 aa).

This sequence belongs to the NadD family.

The catalysed reaction is nicotinate beta-D-ribonucleotide + ATP + H(+) = deamido-NAD(+) + diphosphate. It participates in cofactor biosynthesis; NAD(+) biosynthesis; deamido-NAD(+) from nicotinate D-ribonucleotide: step 1/1. Functionally, catalyzes the reversible adenylation of nicotinate mononucleotide (NaMN) to nicotinic acid adenine dinucleotide (NaAD). In Listeria monocytogenes serotype 4b (strain F2365), this protein is Probable nicotinate-nucleotide adenylyltransferase.